The primary structure comprises 475 residues: Ataxin-10 (475 aa).

At R10 the chain carries Omega-N-methylarginine. Phosphoserine is present on residues S12 and S77. T82 carries the post-translational modification Phosphothreonine. A Phosphoserine modification is found at S430.

The protein belongs to the ataxin-10 family. As to quaternary structure, homooligomer. Interacts with GNB2. Interacts with IQCB1. Interacts with OGT. Polyubiquitinated. Post-translationally, phosphorylation at Ser-12 by AURKB promotes the association of ATXN10 with PLK1. Phosphorylation at Ser-77 and Thr-82 by PLK1 may play a role in the regulation of cytokinesis and may stimulate the proteasome-mediated degradation of ATXN10. As to expression, ubiquitous distribution. Markedly increased expression in testis, adrenals, and brain.

The protein localises to the cytoplasm. It is found in the perinuclear region. The protein resides in the midbody. It localises to the cytoskeleton. Its subcellular location is the cilium basal body. The protein localises to the microtubule organizing center. It is found in the centrosome. The protein resides in the centriole. Its function is as follows. May play a role in the regulation of cytokinesis. May play a role in signaling by stimulating protein glycosylation. Induces neuritogenesis by activating the Ras-MAP kinase pathway and is necessary for the survival of cerebellar neurons. Does not appear to play a major role in ciliogenesis. The chain is Ataxin-10 (Atxn10) from Rattus norvegicus (Rat).